We begin with the raw amino-acid sequence, 151 residues long: Transcriptional regulator MraZ (151 aa).

SpoVT-AbrB domains lie at 5–51 and 81–124; these read AHEL…PVAE and AEIL…GREQ.

This sequence belongs to the MraZ family. As to quaternary structure, forms oligomers.

It is found in the cytoplasm. The protein resides in the nucleoid. This is Transcriptional regulator MraZ from Neisseria meningitidis serogroup A / serotype 4A (strain DSM 15465 / Z2491).